A 457-amino-acid polypeptide reads, in one-letter code: uncharacterized protein (457 aa).

Positions 6 to 64 (PVHKGEVLDVTIMDLTYQGMGVAKVDNYPIFIENALPEEKITVKVTKTTKNFAFGDVEK) constitute a TRAM domain. The S-adenosyl-L-methionine site is built by Q287, Y316, E337, and D385. C412 functions as the Nucleophile in the catalytic mechanism.

This sequence belongs to the class I-like SAM-binding methyltransferase superfamily. RNA M5U methyltransferase family.

This is an uncharacterized protein from Lactiplantibacillus plantarum (strain ATCC BAA-793 / NCIMB 8826 / WCFS1) (Lactobacillus plantarum).